The sequence spans 423 residues: Imidazolonepropionase (423 aa).

Fe(3+)-binding residues include His91 and His93. Residues His91 and His93 each contribute to the Zn(2+) site. 4-imidazolone-5-propanoate is bound by residues Arg100, Tyr163, and His193. Tyr163 serves as a coordination point for N-formimidoyl-L-glutamate. Residue His257 participates in Fe(3+) binding. Residue His257 coordinates Zn(2+). 4-imidazolone-5-propanoate is bound at residue Gln260. Asp331 lines the Fe(3+) pocket. Asp331 is a binding site for Zn(2+). Asn333 and Gly335 together coordinate N-formimidoyl-L-glutamate. Residue Thr336 participates in 4-imidazolone-5-propanoate binding.

Belongs to the metallo-dependent hydrolases superfamily. HutI family. The cofactor is Zn(2+). Fe(3+) is required as a cofactor.

It is found in the cytoplasm. The enzyme catalyses 4-imidazolone-5-propanoate + H2O = N-formimidoyl-L-glutamate. The protein operates within amino-acid degradation; L-histidine degradation into L-glutamate; N-formimidoyl-L-glutamate from L-histidine: step 3/3. Functionally, catalyzes the hydrolytic cleavage of the carbon-nitrogen bond in imidazolone-5-propanoate to yield N-formimidoyl-L-glutamate. It is the third step in the universal histidine degradation pathway. The polypeptide is Imidazolonepropionase (Bdellovibrio bacteriovorus (strain ATCC 15356 / DSM 50701 / NCIMB 9529 / HD100)).